Reading from the N-terminus, the 407-residue chain is Arrestin domain-containing protein 2 (407 aa).

It belongs to the arrestin family. Interacts with WWP1 (via WW domains).

This is Arrestin domain-containing protein 2 (ARRDC2) from Homo sapiens (Human).